Reading from the N-terminus, the 1375-residue chain is DNA-directed RNA polymerase subunit beta (1375 aa).

This sequence belongs to the RNA polymerase beta chain family. In terms of assembly, the RNAP catalytic core consists of 2 alpha, 1 beta, 1 beta' and 1 omega subunit. When a sigma factor is associated with the core the holoenzyme is formed, which can initiate transcription.

The catalysed reaction is RNA(n) + a ribonucleoside 5'-triphosphate = RNA(n+1) + diphosphate. DNA-dependent RNA polymerase catalyzes the transcription of DNA into RNA using the four ribonucleoside triphosphates as substrates. The sequence is that of DNA-directed RNA polymerase subunit beta from Methylibium petroleiphilum (strain ATCC BAA-1232 / LMG 22953 / PM1).